The sequence spans 239 residues: Phosphoribosylaminoimidazole-succinocarboxamide synthase (239 aa).

It belongs to the SAICAR synthetase family.

It carries out the reaction 5-amino-1-(5-phospho-D-ribosyl)imidazole-4-carboxylate + L-aspartate + ATP = (2S)-2-[5-amino-1-(5-phospho-beta-D-ribosyl)imidazole-4-carboxamido]succinate + ADP + phosphate + 2 H(+). It participates in purine metabolism; IMP biosynthesis via de novo pathway; 5-amino-1-(5-phospho-D-ribosyl)imidazole-4-carboxamide from 5-amino-1-(5-phospho-D-ribosyl)imidazole-4-carboxylate: step 1/2. The chain is Phosphoribosylaminoimidazole-succinocarboxamide synthase from Brevibacillus brevis (strain 47 / JCM 6285 / NBRC 100599).